Reading from the N-terminus, the 308-residue chain is Dual oxidase maturation factor 1 (308 aa).

Topologically, residues 1 to 21 (MQANIFPFYPQPRTPFKFDTK) are extracellular. Residues 22 to 42 (IIEIIIICIVTACTFIIILPG) traverse the membrane as a helical segment. At 43-49 (IRGKSRS) the chain is on the cytoplasmic side. A helical transmembrane segment spans residues 50-70 (IWLLRILTSLFIGAVILAVNF). At 71–91 (TSDWEMGTITATTVYKSFSHS) the chain is on the extracellular side. The chain crosses the membrane as a helical span at residues 92–112 (MLNASIGLWIGLKGLNITLIG). Residues 113 to 175 (NPEYQLNETI…GLFQQYCIST (63 aa)) are Cytoplasmic-facing. The chain crosses the membrane as a helical span at residues 176–198 (YYSSGIMWIAFCSWILYNVLFSM). A topological domain (extracellular) is located at residue P199. A helical membrane pass occupies residues 200-220 (VILYGIYMMFVTAICMLVSLI). Topologically, residues 221–247 (SFASVRKAPVCNIQFGNSILKTHFGVS) are cytoplasmic. The chain crosses the membrane as a helical span at residues 248 to 268 (YWLSLITGLLCLIISLVLLFL). At 269-308 (YKTQPKVLQLIFSYGEEEDLSNKSENEEEHSSVLSLNEIL) the chain is on the extracellular side. N-linked (GlcNAc...) asparagine glycosylation is present at N290.

It belongs to the DUOXA family.

The protein localises to the membrane. Functionally, possible role in maturation and transport from the endoplasmic reticulum to the plasma membrane of functional dual oxidase. The protein is Dual oxidase maturation factor 1 (duoxa1) of Xenopus laevis (African clawed frog).